Consider the following 148-residue polypeptide: uncharacterized protein (148 aa).

This is an uncharacterized protein from Archaeoglobus fulgidus (strain ATCC 49558 / DSM 4304 / JCM 9628 / NBRC 100126 / VC-16).